The primary structure comprises 567 residues: Phosphoglucomutase-like protein 5 (567 aa).

Residues 1-26 form a disordered region; it reads MEGSPIPVLTVPTAPYEDQRPTGGGG. Threonine 120 is subject to Phosphothreonine. Serine 122 is modified (phosphoserine).

It belongs to the phosphohexose mutase family. In terms of assembly, interacts with DMD/dystrophin; the interaction is direct. Interacts with UTRN/utrophin.

The protein localises to the cell junction. It is found in the adherens junction. Its subcellular location is the cytoplasm. The protein resides in the cytoskeleton. It localises to the cell membrane. The protein localises to the sarcolemma. Component of adherens-type cell-cell and cell-matrix junctions. Has no phosphoglucomutase activity in vitro. The protein is Phosphoglucomutase-like protein 5 of Rattus norvegicus (Rat).